A 725-amino-acid chain; its full sequence is Golgin candidate 4 (725 aa).

Residues 17–62 (HDVHDDDEDDDEDLTIYGSTNGGTDRRNSNGFRYSRSPMANGFESP) form a disordered region. Residues 21–30 (DDDEDDDEDL) are compositionally biased toward acidic residues. A coiled-coil region spans residues 66-132 (EIERYKAEIN…LKESRLDLSR (67 aa)). 3 disordered regions span residues 134–183 (SNNN…SHKK), 191–210 (LEER…EKER), and 311–349 (ASQK…KEDM). Residues 148–175 (NRSQRSPTNWKNRNQMNNGIASKPNGTE) show a composition bias toward polar residues. 3 coiled-coil regions span residues 191-316 (LEER…QKST), 344-407 (PGKE…QTNE), and 437-563 (EIRK…LNRM). Residues 324–349 (STEDLSRHLSSLDEEKAGTFPGKEDM) show a composition bias toward basic and acidic residues. Residues 562–613 (RMSMDSDFLVDRRIVIKLLVTYFQRNHSREVLDLMVRMLGFSEEEKQRIGLA) enclose the GRIP domain. The segment covering 672–688 (ERERREAEDAANKEQEK) has biased composition (basic and acidic residues). The segment at 672 to 725 (ERERREAEDAANKEQEKATVSSTQRPKYEQSDSEFSTVPLTSSNSNHRLSRLLT) is disordered. Residues 711-725 (LTSSNSNHRLSRLLT) show a composition bias toward low complexity.

The protein localises to the golgi apparatus. Functionally, golgi matrix protein playing a role in tethering of vesicles to Golgi membranes and in maintaining the overall structure of the Golgi apparatus. In Arabidopsis thaliana (Mouse-ear cress), this protein is Golgin candidate 4 (GC4).